We begin with the raw amino-acid sequence, 550 residues long: Cochlin (550 aa).

The N-terminal stretch at 1-24 is a signal peptide; it reads MSAAWIPALGLGVCLLLLPGPAGS. One can recognise an LCCL domain in the interval 28–121; it reads APIAITCFTR…QMLSRWSASF (94 aa). Disulfide bonds link cysteine 34–cysteine 50 and cysteine 54–cysteine 74. Asparagine 100 is a glycosylation site (N-linked (GlcNAc...) asparagine). Polar residues predominate over residues 128-139; sequence SSTQEATGQAVS. A disordered region spans residues 128–159; sequence SSTQEATGQAVSTAHPPTGKRLKKTPEKKTGN. VWFA domains are found at residues 165–346 and 367–537; these read DIAF…VKPL and NIAF…VSDV. Asparagine 221 carries N-linked (GlcNAc...) asparagine glycosylation.

As to quaternary structure, monomer. May form homodimer. Interacts with type II collagen. Interacts with SLC44A2. Interacts with ANXA2. Post-translationally, N-glycosylated. In terms of processing, a 50 kDa form is created by proteolytic cleavage. As to expression, expressed in inner ear structures; the cochlea and the vestibule.

It localises to the secreted. It is found in the extracellular space. The protein localises to the extracellular matrix. In terms of biological role, plays a role in the control of cell shape and motility in the trabecular meshwork. This Homo sapiens (Human) protein is Cochlin (COCH).